Consider the following 424-residue polypeptide: Tyrosine--tRNA ligase (424 aa).

Tyrosine 37 is an L-tyrosine binding site. Positions 42–51 match the 'HIGH' region motif; sequence PTADSLHLGH. L-tyrosine is bound by residues tyrosine 175 and glutamine 179. A 'KMSKS' region motif is present at residues 235-239; that stretch reads KFGKT. Lysine 238 provides a ligand contact to ATP. The 58-residue stretch at 357–414 folds into the S4 RNA-binding domain; sequence ADLMQALVDAELQPSRGQARKTIASNAVTINGEKQSDPEYIFNDEDRLFGRYTLLRRG.

The protein belongs to the class-I aminoacyl-tRNA synthetase family. TyrS type 1 subfamily. Homodimer.

The protein localises to the cytoplasm. It catalyses the reaction tRNA(Tyr) + L-tyrosine + ATP = L-tyrosyl-tRNA(Tyr) + AMP + diphosphate + H(+). Catalyzes the attachment of tyrosine to tRNA(Tyr) in a two-step reaction: tyrosine is first activated by ATP to form Tyr-AMP and then transferred to the acceptor end of tRNA(Tyr). This is Tyrosine--tRNA ligase from Salmonella agona (strain SL483).